Reading from the N-terminus, the 260-residue chain is Repetitive secreted protein 1 (260 aa).

The signal sequence occupies residues 1–20 (MKLSFTIVATAALVASCTFA).

Post-translationally, rsp1 is processed by the subtilisin-like endoprotease kex2. Cleavage by kex2 generates 11 peptides.

It is found in the secreted. Functionally, repetitive secreted protein essential for pathogenic development. Hum3 and rsp1 together are pathogenicity proteins that share an essential function in early stages of the infection. This is Repetitive secreted protein 1 from Mycosarcoma maydis (Corn smut fungus).